The following is a 107-amino-acid chain: Large ribosomal subunit protein P2 (107 aa).

Residues 86–107 (PAAAAAEAEEEDDDDMGFGLFD) form a disordered region. The segment covering 92-101 (EAEEEDDDDM) has biased composition (acidic residues).

The protein belongs to the eukaryotic ribosomal protein P1/P2 family. In terms of assembly, P1 and P2 exist as dimers at the large ribosomal subunit. Phosphorylated.

In terms of biological role, plays an important role in the elongation step of protein synthesis. This chain is Large ribosomal subunit protein P2, found in Trypanosoma brucei brucei.